Consider the following 219-residue polypeptide: Small ribosomal subunit protein uS3c (219 aa).

Residues 43 to 120 (IQNYIQKNMQ…KINITITKIT (78 aa)) form the KH type-2 domain.

The protein belongs to the universal ribosomal protein uS3 family. Part of the 30S ribosomal subunit.

The protein localises to the plastid. Its subcellular location is the chloroplast. The chain is Small ribosomal subunit protein uS3c (rps3) from Oenothera elata subsp. hookeri (Hooker's evening primrose).